The following is a 510-amino-acid chain: MIWHVQNENFILDSTRIFMKAFHLLLFHGSFIFPECILIFGLILLLMIDSTSDQKDRPWFYFISSTTLVMSITALLFRWREEPIISFSGNFQTNNFNEIFQFLILLCSTLCIPLSVEYIECTEMAITEFLLFVLTATLGGMFLCGANDLITLFVAPECFSLCSYLLSGYTKRDVRSNEATMKYLLMGGASSSILVHGFSWLYGSSGGEIELQEIVNGLINTQMYNSPGISIALISITVGIGFKLSPAPFHQWTPDVYEGSPTPVVAFLSVTSKVAASASATRIFDIPFYFSSNEWHLLLEILAILSMILGNLIAITQTSMKRMLAYSSIGQIGYVIIGIIVGDSNDGYASMITYMLFYISMNLGTFACIVSFGLRTGTDNIRDYAGLYTKDPFLALSLALCLLSLGGLPPLAGFFGKLHLFWCGWQAGLYFLVSIGLLTSVVSIYYYLKIIKLLMTGRNQEITPHVRNYRRSPLRSNNSIELSMTVCVIASTIPGISMNPILAIAQDTLF.

12 consecutive transmembrane segments (helical) span residues 24-44 (LLLF…GLIL), 59-79 (WFYF…LFRW), 99-119 (IFQF…VEYI), 124-144 (MAIT…MFLC), 149-169 (LITL…LSGY), 183-203 (YLLM…WLYG), 229-249 (ISIA…PAPF), 295-315 (WHLL…LIAI), 323-343 (MLAY…IVGD), 354-374 (YMLF…SFGL), 395-415 (ALSL…AGFF), and 418-438 (LHLF…IGLL).

It belongs to the complex I subunit 2 family. NDH is composed of at least 16 different subunits, 5 of which are encoded in the nucleus.

The protein localises to the plastid. It is found in the chloroplast thylakoid membrane. It catalyses the reaction a plastoquinone + NADH + (n+1) H(+)(in) = a plastoquinol + NAD(+) + n H(+)(out). It carries out the reaction a plastoquinone + NADPH + (n+1) H(+)(in) = a plastoquinol + NADP(+) + n H(+)(out). In terms of biological role, NDH shuttles electrons from NAD(P)H:plastoquinone, via FMN and iron-sulfur (Fe-S) centers, to quinones in the photosynthetic chain and possibly in a chloroplast respiratory chain. The immediate electron acceptor for the enzyme in this species is believed to be plastoquinone. Couples the redox reaction to proton translocation, and thus conserves the redox energy in a proton gradient. This chain is NAD(P)H-quinone oxidoreductase subunit 2 A, chloroplastic, found in Dioscorea elephantipes (Elephant's foot yam).